Here is a 742-residue protein sequence, read N- to C-terminus: Tegument protein UL47 (742 aa).

Residues Met1–Glu10 are compositionally biased toward basic and acidic residues. Disordered regions lie at residues Met1 to Leu128 and Glu155 to Ala199. The Nuclear localization signal motif lies at Glu10–Arg30. The segment covering Thr18–Leu37 has biased composition (low complexity). The span at Arg38 to Asp62 shows a compositional bias: basic and acidic residues. Residues Glu63–Ser88 are compositionally biased toward acidic residues. The short motif at Arg95 to Asp122 is the Nuclear export signal element. The Nuclear export signal signature appears at Leu485–Leu495.

This sequence belongs to the alphaherpesvirinae HHV-1 UL47 family. In terms of assembly, interacts with US3 kinase. Interacts with UL31 and UL34; these interactions seem important for efficient virion nuclear egress. Interacts with UL41/VHS. Post-translationally, phosphorylated by US3. This phosphorylation is required for proper nuclear localization.

Its subcellular location is the virion tegument. It is found in the host nucleus. The protein localises to the host cytoplasm. Tegument protein that can bind to various RNA transcripts. Plays a role in the attenuation of selective viral and cellular mRNA degradation by modulating the activity of host shutoff RNase UL41/VHS. Also plays a role in the primary envelopment of virions in the perinuclear space, probably by interacting with two nuclear egress proteins UL31 and UL34. The sequence is that of Tegument protein UL47 from Bos taurus (Bovine).